Consider the following 223-residue polypeptide: Glucosyl-3-phosphoglycerate phosphatase (223 aa).

Arg10 provides a ligand contact to substrate. The active-site Tele-phosphohistidine intermediate is His11. An Isoglutamyl lysine isopeptide (Lys-Gln) (interchain with Q-Cter in protein Pup) cross-link involves residue Lys47. Arg60 is a binding site for substrate. Catalysis depends on Glu84, which acts as the Proton donor/acceptor. His159 lines the substrate pocket.

This sequence belongs to the phosphoglycerate mutase family. In terms of assembly, homodimer. Dimerization of the enzyme is essential for its dephosphorylation activity.

The catalysed reaction is (2R)-2-O-(alpha-D-glucopyranosyl)-3-phospho-glycerate + H2O = (2R)-2-O-(alpha-D-glucopyranosyl)-glycerate + phosphate. It catalyses the reaction 2-O-(alpha-D-mannosyl)-3-phosphoglycerate + H2O = (2R)-2-O-(alpha-D-mannosyl)-glycerate + phosphate. The enzyme catalyses (2R)-2-O-[alpha-D-mannopyranosyl-(1-&gt;2)-alpha-D-glucopyranosyl]-3-phospho-glycerate + H2O = (2R)-2-O-[alpha-D-mannopyranosyl-(1-&gt;2)-alpha-D-glucopyranosyl]-glycerate + phosphate. Progressively inhibited by cobalt ions at concentrations between 10-50 mM and by copper ions at any concentration between 1-50 mM. Involved in the biosynthesis of mycobacterial methylglucose lipopolysaccharides (MGLPs). Catalyzes the dephosphorylation of glucosyl-3-phosphoglycerate (GPG) to glucosylglycerate (GG). GPG is the preferred substrate, but GpgP also exhibits low dephosphorylation activity on mannosyl-3-phosphoglycerate (MPG) and mannosylglucosyl-3-phosphoglycerate (MGPG) in vitro. Shows only trace of phosphoglycerate mutase (PGM) activity. This Mycobacterium tuberculosis (strain ATCC 25618 / H37Rv) protein is Glucosyl-3-phosphoglycerate phosphatase.